A 469-amino-acid polypeptide reads, in one-letter code: 3-isopropylmalate dehydratase large subunit (469 aa).

The [4Fe-4S] cluster site is built by cysteine 350, cysteine 410, and cysteine 413.

It belongs to the aconitase/IPM isomerase family. LeuC type 1 subfamily. In terms of assembly, heterodimer of LeuC and LeuD. The cofactor is [4Fe-4S] cluster.

The enzyme catalyses (2R,3S)-3-isopropylmalate = (2S)-2-isopropylmalate. The protein operates within amino-acid biosynthesis; L-leucine biosynthesis; L-leucine from 3-methyl-2-oxobutanoate: step 2/4. In terms of biological role, catalyzes the isomerization between 2-isopropylmalate and 3-isopropylmalate, via the formation of 2-isopropylmaleate. This is 3-isopropylmalate dehydratase large subunit from Brucella anthropi (strain ATCC 49188 / DSM 6882 / CCUG 24695 / JCM 21032 / LMG 3331 / NBRC 15819 / NCTC 12168 / Alc 37) (Ochrobactrum anthropi).